The sequence spans 314 residues: Cell division protein FtsQ (314 aa).

Basic and acidic residues-rich tracts occupy residues 1–15 (MTEH…RVAD) and 30–57 (ESKD…ERRA). The segment at 1–57 (MTEHNEDPQIERVADDAADEEAVTEPLATESKDEPAEHPEFEGPRRRARRERAERRA) is disordered. Topologically, residues 1–99 (MTEHNEDPQI…AARGVVRGLK (99 aa)) are cytoplasmic. Residues 100 to 120 (ALLATVVLAVVGIGLGLALYF) form a helical membrane-spanning segment. Residues 121 to 314 (TPAMSAREIV…VSSPDLPTVK (194 aa)) are Extracellular-facing. Residues 124-192 (MSAREIVIIG…SALRITIVER (69 aa)) enclose the POTRA domain.

This sequence belongs to the FtsQ/DivIB family. FtsQ subfamily.

The protein resides in the cell membrane. In terms of biological role, essential cell division protein. This is Cell division protein FtsQ from Mycobacterium bovis (strain ATCC BAA-935 / AF2122/97).